We begin with the raw amino-acid sequence, 106 residues long: Large ribosomal subunit protein eL42 (106 aa).

This sequence belongs to the eukaryotic ribosomal protein eL42 family.

The protein localises to the cytoplasm. The protein is Large ribosomal subunit protein eL42 (RPL44) of Trypanosoma brucei brucei.